A 169-amino-acid chain; its full sequence is Protein-export protein SecB (169 aa).

Belongs to the SecB family. As to quaternary structure, homotetramer, a dimer of dimers. One homotetramer interacts with 1 SecA dimer.

Its subcellular location is the cytoplasm. Its function is as follows. One of the proteins required for the normal export of preproteins out of the cell cytoplasm. It is a molecular chaperone that binds to a subset of precursor proteins, maintaining them in a translocation-competent state. It also specifically binds to its receptor SecA. This is Protein-export protein SecB from Pseudoalteromonas atlantica (strain T6c / ATCC BAA-1087).